We begin with the raw amino-acid sequence, 67 residues long: Large ribosomal subunit protein uL29 (67 aa).

It belongs to the universal ribosomal protein uL29 family.

This chain is Large ribosomal subunit protein uL29, found in Exiguobacterium sibiricum (strain DSM 17290 / CCUG 55495 / CIP 109462 / JCM 13490 / 255-15).